The chain runs to 305 residues: MSKKLTFQEIILTLQQYWNDQGCMLMQAYDNEKGAGTMSPYTFLRAIGPEPWNAAYVEPSRRPADGRYGENPNRLYQHHQFQVVMKPSPSNIQELYLASLEKLGINPLEHDIRFVEDNWENPSTGSAGLGWEVWLDGMEITQFTYFQQVGGLATSPVTAEVTYGLERLASYIQEVDSVYDIEWAPGVKYGEIFLQPEYEHSKYSFEISDQDMLLENFEKFEKEASRALEEGLVHPAYDYVLKCSHTFNLLDARGAVSVTERAGYIARIRNLARVVAKTFVAERKKLGFPLLDEATRAILLAEDDE.

It belongs to the class-II aminoacyl-tRNA synthetase family. As to quaternary structure, tetramer of two alpha and two beta subunits.

It is found in the cytoplasm. The catalysed reaction is tRNA(Gly) + glycine + ATP = glycyl-tRNA(Gly) + AMP + diphosphate. This chain is Glycine--tRNA ligase alpha subunit, found in Streptococcus pyogenes serotype M2 (strain MGAS10270).